The following is a 599-amino-acid chain: rRNA (cytosine-C(5))-methyltransferase NOP2C (599 aa).

Residues 158–265 (PKEVLVSRKC…IAVDLNHRVF (108 aa)) form the PUA domain. Residues 304-310 (CAAPGGK), D328, and D355 each bind S-adenosyl-L-methionine. Residues 372 to 454 (LINGDNSSSM…GGRAGKSQGF (83 aa)) are disordered. Positions 378–388 (SSSMTSHSELS) are enriched in low complexity. The segment covering 399–412 (RRSEADKSCEKNDS) has biased composition (basic and acidic residues). Positions 413–424 (TEQPNGGDNVSQ) are enriched in polar residues. Residues 428–438 (RKNKGRLKNGR) show a composition bias toward basic residues. D465 lines the S-adenosyl-L-methionine pocket. Catalysis depends on C516, which acts as the Nucleophile.

It belongs to the class I-like SAM-binding methyltransferase superfamily. RsmB/NOP family.

The protein localises to the nucleus. It is found in the nucleolus. The catalysed reaction is a cytidine in rRNA + S-adenosyl-L-methionine = a 5-methylcytidine in rRNA + S-adenosyl-L-homocysteine + H(+). In terms of biological role, involved in ribosomal large subunit assembly. S-adenosyl-L-methionine-dependent methyltransferase that may methylates the C(5) position of cytosine in rRNA. May play a role in the regulation of the cell cycle and the increased nucleolar activity that is associated with the cell proliferation. Seems involved in the regulation of cell proliferation. The protein is rRNA (cytosine-C(5))-methyltransferase NOP2C of Arabidopsis thaliana (Mouse-ear cress).